Consider the following 171-residue polypeptide: Endoribonuclease YbeY (171 aa).

Positions 126, 130, and 136 each coordinate Zn(2+).

This sequence belongs to the endoribonuclease YbeY family. The cofactor is Zn(2+).

It localises to the cytoplasm. Its function is as follows. Single strand-specific metallo-endoribonuclease involved in late-stage 70S ribosome quality control and in maturation of the 3' terminus of the 16S rRNA. The sequence is that of Endoribonuclease YbeY from Rhizobium etli (strain ATCC 51251 / DSM 11541 / JCM 21823 / NBRC 15573 / CFN 42).